The chain runs to 362 residues: Resuscitation-promoting factor RpfB (362 aa).

Residues 1–22 (MLRGVVGAFLVSLTVAGSYAVA) form the signal peptide. Residues 192 to 272 (VTRMRIEKVT…NGVLRVGAKP (81 aa)) enclose the G5 domain.

Belongs to the transglycosylase family. Rpf subfamily.

In terms of biological role, factor that stimulates resuscitation of dormant cells. Has peptidoglycan (PG) hydrolytic activity. Active in the pM concentration range. Has little to no effect on actively-growing cells. PG fragments could either directly activate the resuscitation pathway of dormant bacteria or serve as a substrate for endogenous Rpf, resulting in low molecular weight products with resuscitation activity. The polypeptide is Resuscitation-promoting factor RpfB (rpfB) (Mycolicibacterium smegmatis (strain ATCC 700084 / mc(2)155) (Mycobacterium smegmatis)).